We begin with the raw amino-acid sequence, 122 residues long: Large ribosomal subunit protein uL18 (122 aa).

Belongs to the universal ribosomal protein uL18 family. As to quaternary structure, part of the 50S ribosomal subunit; part of the 5S rRNA/L5/L18/L25 subcomplex. Contacts the 5S and 23S rRNAs.

Its function is as follows. This is one of the proteins that bind and probably mediate the attachment of the 5S RNA into the large ribosomal subunit, where it forms part of the central protuberance. The protein is Large ribosomal subunit protein uL18 of Desulfatibacillum aliphaticivorans.